The following is a 369-amino-acid chain: MKKNIGLIGWRGMVGSVLVERMICENDFFHFNPIFFSTSQKNSKGPTINGEYFGVLKDAYDLDILKELDILISCQGSDYTNKVYFKLRDIGWNGYWIDAASVLRMNQDTVIILDPVNSNTIRESIDSGFKTFVGGNCTVSLMLMSLGGLFSEKLIEWITVSTYQAASGSGAKYIEELLMQMGSMYTEASGYLGNPAHSILNIEKKVRNLSCSDKFPKKNFKVPLAGSLIPWIDKKMRNGQSREEWKIQAETNKILSSNKDILIDGLCVRIGALRCHSQSFVIKLKKDISIPEIEQILLNHNSWTKVIPNRKHDTMTELTPAAVTGTLNTPVGRLRKLNIGQKYLSAFTVGDQLLWGASEPLRRMLKFLI.

NADP(+) is bound by residues 11-14, 38-39, and glutamine 75; these read RGMV and TS. Arginine 104 provides a ligand contact to phosphate. The active-site Acyl-thioester intermediate is cysteine 137. Substrate is bound at residue glutamine 164. NADP(+) contacts are provided by residues 167–168 and proline 195; that span reads SG. Substrate is bound at residue glutamate 243. Lysine 246 provides a ligand contact to phosphate. Residue arginine 269 coordinates substrate. Histidine 276 acts as the Proton acceptor in catalysis. Glutamine 352 is a binding site for NADP(+).

It belongs to the aspartate-semialdehyde dehydrogenase family. Homodimer.

The catalysed reaction is L-aspartate 4-semialdehyde + phosphate + NADP(+) = 4-phospho-L-aspartate + NADPH + H(+). The protein operates within amino-acid biosynthesis; L-lysine biosynthesis via DAP pathway; (S)-tetrahydrodipicolinate from L-aspartate: step 2/4. It participates in amino-acid biosynthesis; L-methionine biosynthesis via de novo pathway; L-homoserine from L-aspartate: step 2/3. It functions in the pathway amino-acid biosynthesis; L-threonine biosynthesis; L-threonine from L-aspartate: step 2/5. In terms of biological role, catalyzes the NADPH-dependent formation of L-aspartate-semialdehyde (L-ASA) by the reductive dephosphorylation of L-aspartyl-4-phosphate. In Buchnera aphidicola subsp. Baizongia pistaciae (strain Bp), this protein is Aspartate-semialdehyde dehydrogenase.